Consider the following 401-residue polypeptide: ATP phosphoribosyltransferase regulatory subunit (401 aa).

It belongs to the class-II aminoacyl-tRNA synthetase family. HisZ subfamily. In terms of assembly, heteromultimer composed of HisG and HisZ subunits.

The protein localises to the cytoplasm. It participates in amino-acid biosynthesis; L-histidine biosynthesis; L-histidine from 5-phospho-alpha-D-ribose 1-diphosphate: step 1/9. Its function is as follows. Required for the first step of histidine biosynthesis. May allow the feedback regulation of ATP phosphoribosyltransferase activity by histidine. This is ATP phosphoribosyltransferase regulatory subunit from Desulforamulus reducens (strain ATCC BAA-1160 / DSM 100696 / MI-1) (Desulfotomaculum reducens).